Here is a 233-residue protein sequence, read N- to C-terminus: MTPHINAKIGDFYPQCLLCGDPLRVSYIAKKFLQDAKEITNVRNMLGFSGKYKGKGISLMGHGMGIASCTIYVTELIKTYQVKELLRIGTCGAISPKVGLKDIIMAIGASTDSKTNRVRFLNHDLSATPDFELSLRAYQTAKRLGIDLKIGNVFSSDFFYSFETHAFDLMAQYNHLAIEMEAAGLYATAMELSAKALCLCSVSDHLITKEALSPKERVESFDNMITLALEMMS.

An a purine D-ribonucleoside-binding site is contributed by H4. Phosphate-binding positions include G20, R24, R43, and 87-90 (RIGT). A purine D-ribonucleoside is bound by residues 179–181 (EME) and 203–204 (SD). D204 acts as the Proton donor in catalysis.

This sequence belongs to the PNP/UDP phosphorylase family. In terms of assembly, homohexamer; trimer of homodimers.

It catalyses the reaction a purine D-ribonucleoside + phosphate = a purine nucleobase + alpha-D-ribose 1-phosphate. The catalysed reaction is a purine 2'-deoxy-D-ribonucleoside + phosphate = a purine nucleobase + 2-deoxy-alpha-D-ribose 1-phosphate. In terms of biological role, catalyzes the reversible phosphorolytic breakdown of the N-glycosidic bond in the beta-(deoxy)ribonucleoside molecules, with the formation of the corresponding free purine bases and pentose-1-phosphate. The sequence is that of Purine nucleoside phosphorylase DeoD-type from Helicobacter pylori (strain G27).